Here is a 605-residue protein sequence, read N- to C-terminus: Elongation factor 4 (605 aa).

Residues Asn-9–Ala-192 enclose the tr-type G domain. GTP-binding positions include Asp-21–Thr-26 and Asn-139–Asp-142.

This sequence belongs to the TRAFAC class translation factor GTPase superfamily. Classic translation factor GTPase family. LepA subfamily.

Its subcellular location is the cell inner membrane. It carries out the reaction GTP + H2O = GDP + phosphate + H(+). Functionally, required for accurate and efficient protein synthesis under certain stress conditions. May act as a fidelity factor of the translation reaction, by catalyzing a one-codon backward translocation of tRNAs on improperly translocated ribosomes. Back-translocation proceeds from a post-translocation (POST) complex to a pre-translocation (PRE) complex, thus giving elongation factor G a second chance to translocate the tRNAs correctly. Binds to ribosomes in a GTP-dependent manner. This chain is Elongation factor 4, found in Pelodictyon phaeoclathratiforme (strain DSM 5477 / BU-1).